The sequence spans 293 residues: Aspartate carbamoyltransferase catalytic subunit (293 aa).

R50 and T51 together coordinate carbamoyl phosphate. K78 provides a ligand contact to L-aspartate. R100, H127, and Q130 together coordinate carbamoyl phosphate. L-aspartate is bound by residues R160 and R210. Residues A253 and P254 each contribute to the carbamoyl phosphate site.

It belongs to the aspartate/ornithine carbamoyltransferase superfamily. ATCase family. As to quaternary structure, heterododecamer (2C3:3R2) of six catalytic PyrB chains organized as two trimers (C3), and six regulatory PyrI chains organized as three dimers (R2).

It catalyses the reaction carbamoyl phosphate + L-aspartate = N-carbamoyl-L-aspartate + phosphate + H(+). It participates in pyrimidine metabolism; UMP biosynthesis via de novo pathway; (S)-dihydroorotate from bicarbonate: step 2/3. Its function is as follows. Catalyzes the condensation of carbamoyl phosphate and aspartate to form carbamoyl aspartate and inorganic phosphate, the committed step in the de novo pyrimidine nucleotide biosynthesis pathway. The sequence is that of Aspartate carbamoyltransferase catalytic subunit from Staphylococcus epidermidis (strain ATCC 12228 / FDA PCI 1200).